A 337-amino-acid polypeptide reads, in one-letter code: MVREEVVGSTRALQWKCVESRADSKRLYYGRFILSPLLKGQADTIGIAMRRALLGEIEGTCITRAKSEKVPHEYSTIAGIEESVHEILMNLKEIVLRSNLYGTRDASICVRGPRCVTAQDIISPPSVEVVDTTQHIASLTEPIDLCIGLQIQRDRGYRMKTTKNSQDGSYPIDAVSMPVRNANHSIHSYGNGNQKQEILFLEIWTNGSLTPKEALHEASRNLIDLFIPFLHAEEEDINFEENQNRFTVPPFTFPDRLANLKKNKKEIALKCIFIDQSELPPRTYNCLKRSNIHTLLDLLSNSQEDLMKIEYFRIEDVKQILDTLRKHFAIDLPKNKF.

The tract at residues 1-233 (MVREEVVGST…DLFIPFLHAE (233 aa)) is alpha N-terminal domain (alpha-NTD). The interval 265 to 337 (KEIALKCIFI…FAIDLPKNKF (73 aa)) is alpha C-terminal domain (alpha-CTD).

The protein belongs to the RNA polymerase alpha chain family. As to quaternary structure, in plastids the minimal PEP RNA polymerase catalytic core is composed of four subunits: alpha, beta, beta', and beta''. When a (nuclear-encoded) sigma factor is associated with the core the holoenzyme is formed, which can initiate transcription.

The protein resides in the plastid. Its subcellular location is the chloroplast. The catalysed reaction is RNA(n) + a ribonucleoside 5'-triphosphate = RNA(n+1) + diphosphate. DNA-dependent RNA polymerase catalyzes the transcription of DNA into RNA using the four ribonucleoside triphosphates as substrates. The sequence is that of DNA-directed RNA polymerase subunit alpha from Acorus gramineus (Dwarf sweet flag).